Consider the following 158-residue polypeptide: NADH-quinone oxidoreductase subunit B (158 aa).

Residues Cys-37, Cys-38, Cys-102, and Cys-132 each contribute to the [4Fe-4S] cluster site.

It belongs to the complex I 20 kDa subunit family. As to quaternary structure, NDH-1 is composed of 14 different subunits. Subunits NuoB, C, D, E, F, and G constitute the peripheral sector of the complex. It depends on [4Fe-4S] cluster as a cofactor.

The protein resides in the cell inner membrane. The catalysed reaction is a quinone + NADH + 5 H(+)(in) = a quinol + NAD(+) + 4 H(+)(out). Functionally, NDH-1 shuttles electrons from NADH, via FMN and iron-sulfur (Fe-S) centers, to quinones in the respiratory chain. Couples the redox reaction to proton translocation (for every two electrons transferred, four hydrogen ions are translocated across the cytoplasmic membrane), and thus conserves the redox energy in a proton gradient. The polypeptide is NADH-quinone oxidoreductase subunit B (Aromatoleum aromaticum (strain DSM 19018 / LMG 30748 / EbN1) (Azoarcus sp. (strain EbN1))).